Consider the following 378-residue polypeptide: Phosphatidyl-myo-inositol mannosyltransferase (378 aa).

The GDP-alpha-D-mannose site is built by Tyr-9 and Gly-16. Residues Gln-18, 62–63 (YN), and Arg-68 each bind a 1,2-diacyl-sn-glycero-3-phospho-(1D-myo-inositol). GDP-alpha-D-mannose is bound by residues Arg-196, 201-202 (RK), 251-253 (VDD), Lys-256, 274-278 (ESFGI), and Glu-282.

The protein belongs to the glycosyltransferase group 1 family. Monomer. Requires Mg(2+) as cofactor.

Its subcellular location is the cell membrane. It carries out the reaction a 1,2-diacyl-sn-glycero-3-phospho-(1D-myo-inositol) + GDP-alpha-D-mannose = a 1,2-diacyl-sn-glycero-3-phospho-[alpha-D-mannopyranosyl-(1&lt;-&gt;6)-D-myo-inositol] + GDP + H(+). It participates in phospholipid metabolism; phosphatidylinositol metabolism. Its function is as follows. Involved in the biosynthesis of phosphatidyl-myo-inositol mannosides (PIM) which are early precursors in the biosynthesis of lipomannans (LM) and lipoarabinomannans (LAM). Catalyzes the addition of a mannosyl residue from GDP-D-mannose (GDP-Man) to the position 2 of the carrier lipid phosphatidyl-myo-inositol (PI) to generate a phosphatidyl-myo-inositol bearing an alpha-1,2-linked mannose residue (PIM1). In Mycobacterium bovis (strain ATCC BAA-935 / AF2122/97), this protein is Phosphatidyl-myo-inositol mannosyltransferase.